A 602-amino-acid polypeptide reads, in one-letter code: Beta-(1--&gt;2)glucan export ATP-binding/permease protein NdvA (602 aa).

The ABC transmembrane type-1 domain maps to 21-311 (GWVLAGANLL…VVGFVNSVFM (291 aa)). 6 consecutive transmembrane segments (helical) span residues 22–42 (WVLA…PVLF), 68–88 (LLLA…AVAL), 146–166 (EHFA…YINW), 167–187 (RLAL…TLVV), 238–258 (LLAM…ITRA), and 285–305 (IVMF…VVGF). The region spanning 345–579 (VEFDNVSFSY…RGYFAELAHA (235 aa)) is the ABC transporter domain. 378–385 (GATGAGKS) is a binding site for ATP.

This sequence belongs to the ABC transporter superfamily. Beta-(1--&gt;2)glucan exporter (TC 3.A.1.108.1) family. In terms of assembly, homodimer.

It is found in the cell inner membrane. The enzyme catalyses [(1-&gt;2)-beta-D-glucosyl](n)(in) + ATP + H2O = [(1-&gt;2)-beta-D-glucosyl](n)(out) + ADP + phosphate + H(+). Functionally, involved in Beta-(1--&gt;2)glucan export. Transmembrane domains (TMD) form a pore in the inner membrane and the ATP-binding domain (NBD) is responsible for energy generation. The polypeptide is Beta-(1--&gt;2)glucan export ATP-binding/permease protein NdvA (Rhodopseudomonas palustris (strain BisA53)).